The primary structure comprises 154 residues: UPF0178 protein Glov_0658 (154 aa).

The protein belongs to the UPF0178 family.

The polypeptide is UPF0178 protein Glov_0658 (Trichlorobacter lovleyi (strain ATCC BAA-1151 / DSM 17278 / SZ) (Geobacter lovleyi)).